Reading from the N-terminus, the 319-residue chain is Ribosomal protein L11 methyltransferase (319 aa).

S-adenosyl-L-methionine is bound by residues T165, G186, D208, and N251.

Belongs to the methyltransferase superfamily. PrmA family.

It localises to the cytoplasm. The enzyme catalyses L-lysyl-[protein] + 3 S-adenosyl-L-methionine = N(6),N(6),N(6)-trimethyl-L-lysyl-[protein] + 3 S-adenosyl-L-homocysteine + 3 H(+). Its function is as follows. Methylates ribosomal protein L11. This chain is Ribosomal protein L11 methyltransferase, found in Limosilactobacillus reuteri subsp. reuteri (strain JCM 1112) (Lactobacillus reuteri).